The chain runs to 86 residues: Protein K3 homolog (86 aa).

The S1 motif domain maps to Asn15–Val86.

The protein belongs to the poxviridae K3 protein family. In terms of assembly, interacts with host PKR kinase.

Functionally, viral mimic of eIF-2-alpha that acts as a pseudosubstrate for EIF2AK2/PKR kinase. Inhibits therefore eIF-2-alpha phosphorylation by host EIF2AK2/PKR kinase and prevents protein synthesis shutoff. In Sus scrofa (Pig), this protein is Protein K3 homolog.